The following is a 217-amino-acid chain: Large ribosomal subunit protein uL1 (217 aa).

Serine 2 is subject to N-acetylserine. Tyrosine 11 carries the post-translational modification Phosphotyrosine. An N6-acetyllysine mark is found at lysine 91 and lysine 106. Position 118 is an N6-acetyllysine; alternate (lysine 118). Residue lysine 118 forms a Glycyl lysine isopeptide (Lys-Gly) (interchain with G-Cter in SUMO1); alternate linkage. A Glycyl lysine isopeptide (Lys-Gly) (interchain with G-Cter in SUMO2); alternate cross-link involves residue lysine 118. Lysine 161 participates in a covalent cross-link: Glycyl lysine isopeptide (Lys-Gly) (interchain with G-Cter in SUMO2).

It belongs to the universal ribosomal protein uL1 family. In terms of assembly, component of the large ribosomal subunit.

The protein resides in the cytoplasm. Its function is as follows. Component of the large ribosomal subunit. The ribosome is a large ribonucleoprotein complex responsible for the synthesis of proteins in the cell. The chain is Large ribosomal subunit protein uL1 (RPL10A) from Bos taurus (Bovine).